A 93-amino-acid polypeptide reads, in one-letter code: Integration host factor subunit beta (93 aa).

This sequence belongs to the bacterial histone-like protein family. As to quaternary structure, heterodimer of an alpha and a beta chain.

In terms of biological role, this protein is one of the two subunits of integration host factor, a specific DNA-binding protein that functions in genetic recombination as well as in transcriptional and translational control. In Glaesserella parasuis serovar 5 (strain SH0165) (Haemophilus parasuis), this protein is Integration host factor subunit beta.